The sequence spans 298 residues: MFKSGFVAILGRPNVGKSTFLNHVMGQKIAIMSDKAQTTRNKIMGIYTTETEQIVFIDTPGIHKPKTALGDFMVESAYSTLREVETVLFMVPADEKRGKGDDMIIERLKAAKIPVILVINKIDKVHPDQLLEQIDDFRSQMDFKEVVPISALEGNNVPTLIKLLTDNLEEGFQYFPEDQITDHPERFLVSEMIREKVLHFTQQEVPHSVAVVVESMKRDEETDKVHIRATIMVERDSQKGIIIGKQGAMLKKIGKMARRDIELMLGDKVYLETWVKVKKNWRDKKLDLADFGYNEKEY.

The Era-type G domain maps to lysine 3–glutamate 170. The tract at residues glycine 11–serine 18 is G1. GTP is bound at residue glycine 11–serine 18. The interval glutamine 37 to asparagine 41 is G2. Residues aspartate 58 to glycine 61 are G3. Residues aspartate 58–isoleucine 62 and asparagine 120–aspartate 123 each bind GTP. A G4 region spans residues asparagine 120 to aspartate 123. The segment at isoleucine 149–alanine 151 is G5. The KH type-2 domain maps to threonine 201–lysine 279.

Belongs to the TRAFAC class TrmE-Era-EngA-EngB-Septin-like GTPase superfamily. Era GTPase family. Monomer.

The protein localises to the cytoplasm. It localises to the cell membrane. Functionally, an essential GTPase that binds both GDP and GTP, with rapid nucleotide exchange. Plays a role in 16S rRNA processing and 30S ribosomal subunit biogenesis and possibly also in cell cycle regulation and energy metabolism. This chain is GTPase Era, found in Streptococcus pyogenes serotype M2 (strain MGAS10270).